The primary structure comprises 37 residues: Large ribosomal subunit protein bL12 (37 aa).

It belongs to the bacterial ribosomal protein bL12 family. As to quaternary structure, homodimer. Part of the ribosomal stalk of the 50S ribosomal subunit. Forms a multimeric L10(L12)X complex, where L10 forms an elongated spine to which 2 to 4 L12 dimers bind in a sequential fashion. Binds GTP-bound translation factors.

In terms of biological role, forms part of the ribosomal stalk which helps the ribosome interact with GTP-bound translation factors. Is thus essential for accurate translation. The chain is Large ribosomal subunit protein bL12 (rplL) from Clostridium pasteurianum.